Reading from the N-terminus, the 699-residue chain is DNA ligase (699 aa).

A disordered region spans residues 1–29 (MSDADVDAESNPYLRDPPTEFEPAESLSR). NAD(+)-binding positions include 60-64 (DAAYD), 108-109 (SI), and E137. Catalysis depends on K139, which acts as the N6-AMP-lysine intermediate. 4 residues coordinate NAD(+): R160, E196, K311, and K335. Zn(2+)-binding residues include C425, C428, C441, and C447. A BRCT domain is found at 613–666 (SGGDELDGLTFVVTGTLAASRSDVTELVESHGGNVTGSVSGNTDYLVVGENPGR).

This sequence belongs to the NAD-dependent DNA ligase family. LigA subfamily. Mg(2+) serves as cofactor. Requires Mn(2+) as cofactor.

The catalysed reaction is NAD(+) + (deoxyribonucleotide)n-3'-hydroxyl + 5'-phospho-(deoxyribonucleotide)m = (deoxyribonucleotide)n+m + AMP + beta-nicotinamide D-nucleotide.. Displays maximal in vitro activity at high salt levels. Its function is as follows. DNA ligase that catalyzes the formation of phosphodiester linkages between 5'-phosphoryl and 3'-hydroxyl groups in double-stranded DNA using NAD as a coenzyme and as the energy source for the reaction. It is essential for DNA replication and repair of damaged DNA. This Haloferax volcanii (strain ATCC 29605 / DSM 3757 / JCM 8879 / NBRC 14742 / NCIMB 2012 / VKM B-1768 / DS2) (Halobacterium volcanii) protein is DNA ligase.